A 342-amino-acid chain; its full sequence is Methylthioribose-1-phosphate isomerase (342 aa).

Residues 49 to 51 (RGA), R86, and Q187 contribute to the substrate site. Residue D228 is the Proton donor of the active site. Residue 238 to 239 (NK) coordinates substrate.

It belongs to the eIF-2B alpha/beta/delta subunits family. MtnA subfamily.

The enzyme catalyses 5-(methylsulfanyl)-alpha-D-ribose 1-phosphate = 5-(methylsulfanyl)-D-ribulose 1-phosphate. The protein operates within amino-acid biosynthesis; L-methionine biosynthesis via salvage pathway; L-methionine from S-methyl-5-thio-alpha-D-ribose 1-phosphate: step 1/6. In terms of biological role, catalyzes the interconversion of methylthioribose-1-phosphate (MTR-1-P) into methylthioribulose-1-phosphate (MTRu-1-P). The protein is Methylthioribose-1-phosphate isomerase of Citrobacter koseri (strain ATCC BAA-895 / CDC 4225-83 / SGSC4696).